Here is a 171-residue protein sequence, read N- to C-terminus: S-ribosylhomocysteine lyase (171 aa).

Fe cation contacts are provided by His54, His58, and Cys128.

Belongs to the LuxS family. Homodimer. It depends on Fe cation as a cofactor.

The catalysed reaction is S-(5-deoxy-D-ribos-5-yl)-L-homocysteine = (S)-4,5-dihydroxypentane-2,3-dione + L-homocysteine. Involved in the synthesis of autoinducer 2 (AI-2) which is secreted by bacteria and is used to communicate both the cell density and the metabolic potential of the environment. The regulation of gene expression in response to changes in cell density is called quorum sensing. Catalyzes the transformation of S-ribosylhomocysteine (RHC) to homocysteine (HC) and 4,5-dihydroxy-2,3-pentadione (DPD). The polypeptide is S-ribosylhomocysteine lyase (Campylobacter concisus (strain 13826)).